The sequence spans 213 residues: Reticulon-3 (213 aa).

Over residues 1 to 16 (MADTSGPQSSHISSSA) the composition is skewed to polar residues. Residues 1-20 (MADTSGPQSSHISSSAGEKG) form a disordered region. A Reticulon domain is found at 25-213 (VQDLLYWRDV…LPGALKKKSE (189 aa)). 2 consecutive transmembrane segments (helical) span residues 45 to 65 (MVLLLSLAAFSIISVISYLVL) and 154 to 174 (VFNGITLLILGVLLAFTAPIV).

As to quaternary structure, homodimer.

It is found in the endoplasmic reticulum membrane. The protein resides in the golgi apparatus membrane. In terms of biological role, may be involved in membrane trafficking in the early secretory pathway. The polypeptide is Reticulon-3 (rtn3) (Xenopus tropicalis (Western clawed frog)).